Consider the following 445-residue polypeptide: Eukaryotic translation initiation factor 3 subunit E (445 aa).

Positions 230–403 (FFNHVKGRDL…GHVVMGAQPL (174 aa)) constitute a PCI domain.

The protein belongs to the eIF-3 subunit E family. As to quaternary structure, component of the eukaryotic translation initiation factor 3 (eIF-3) complex.

Its subcellular location is the cytoplasm. Its function is as follows. Component of the eukaryotic translation initiation factor 3 (eIF-3) complex, which is involved in protein synthesis of a specialized repertoire of mRNAs and, together with other initiation factors, stimulates binding of mRNA and methionyl-tRNAi to the 40S ribosome. The eIF-3 complex specifically targets and initiates translation of a subset of mRNAs involved in cell proliferation. This chain is Eukaryotic translation initiation factor 3 subunit E (eIF3-S6), found in Bombyx mori (Silk moth).